A 256-amino-acid polypeptide reads, in one-letter code: Deoxyribose-phosphate aldolase (256 aa).

The active-site Proton donor/acceptor is the Asp102. The active-site Schiff-base intermediate with acetaldehyde is Lys165. Lys197 (proton donor/acceptor) is an active-site residue.

Belongs to the DeoC/FbaB aldolase family. DeoC type 2 subfamily.

The protein localises to the cytoplasm. It carries out the reaction 2-deoxy-D-ribose 5-phosphate = D-glyceraldehyde 3-phosphate + acetaldehyde. Its pathway is carbohydrate degradation; 2-deoxy-D-ribose 1-phosphate degradation; D-glyceraldehyde 3-phosphate and acetaldehyde from 2-deoxy-alpha-D-ribose 1-phosphate: step 2/2. Its function is as follows. Catalyzes a reversible aldol reaction between acetaldehyde and D-glyceraldehyde 3-phosphate to generate 2-deoxy-D-ribose 5-phosphate. This chain is Deoxyribose-phosphate aldolase, found in Shewanella baltica (strain OS155 / ATCC BAA-1091).